Here is a 33-residue protein sequence, read N- to C-terminus: Cytochrome b6-f complex subunit 8 (33 aa).

The chain crosses the membrane as a helical span at residues 2 to 22; the sequence is LFTVAWASLAAMFSFSIAMVV.

Belongs to the PetN family. As to quaternary structure, the 4 large subunits of the cytochrome b6-f complex are cytochrome b6, subunit IV (17 kDa polypeptide, PetD), cytochrome f and the Rieske protein, while the 4 small subunits are PetG, PetL, PetM and PetN. The complex functions as a dimer.

It localises to the cellular thylakoid membrane. Functionally, component of the cytochrome b6-f complex, which mediates electron transfer between photosystem II (PSII) and photosystem I (PSI), cyclic electron flow around PSI, and state transitions. In Parasynechococcus marenigrum (strain WH8102), this protein is Cytochrome b6-f complex subunit 8.